The chain runs to 52 residues: Light-harvesting protein B-880 alpha chain (52 aa).

At Met1–Arg12 the chain is on the cytoplasmic side. The helical transmembrane segment at Thr13–Leu33 threads the bilayer. Residue His29 coordinates a bacteriochlorophyll. Residues Ser34–Ser52 lie on the Periplasmic side of the membrane.

Belongs to the antenna complex alpha subunit family. As to quaternary structure, the core complex is formed by different alpha and beta chains, binding bacteriochlorophyll molecules, and arranged most probably in tetrameric structures disposed around the reaction center. The non-pigmented gamma chains may constitute additional components.

The protein localises to the cell inner membrane. Its function is as follows. Antenna complexes are light-harvesting systems, which transfer the excitation energy to the reaction centers. The protein is Light-harvesting protein B-880 alpha chain of Afifella marina (Rhodobium marinum).